Here is a 449-residue protein sequence, read N- to C-terminus: Probable secreted beta-glucosidase ARB_04747 (449 aa).

The first 21 residues, 1–21 (MKFSSGILSLAVAASVQSVQA), serve as a signal peptide directing secretion. Asn57 carries N-linked (GlcNAc...) asparagine glycosylation. Residues 96-185 (SPPACPAPSY…RPFPDGEIDC (90 aa)) are disordered. Over residues 98–125 (PACPAPSYVPSPPAAPSSPPAAPQPPSK) the composition is skewed to pro residues. Over residues 131-150 (EEPKKPEEPKKPEGPKKPEG) the composition is skewed to basic and acidic residues.

Belongs to the SUN family.

The protein localises to the secreted. It localises to the cell wall. Its function is as follows. Cell surface beta-glucosidase involved in cytokinesis, cell wall biogenesis, adhesion to host tissue; thus playing an important role in the host-pathogen interaction. Has hydrolytic activity on linear (1-&gt;3)-beta-D-glucans such as laminaribiose and other laminarioligosaccharides. This chain is Probable secreted beta-glucosidase ARB_04747, found in Arthroderma benhamiae (strain ATCC MYA-4681 / CBS 112371) (Trichophyton mentagrophytes).